A 364-amino-acid chain; its full sequence is MSGLFETLGRRALFTFDAEQAHGLSITGLKTGIVTCRTPEDPALSVKVAGLKFPNPLGMAAGYDKNAEVPDALLKLGFGFAEVGTLTPRPQSGNPRPRIFRLVDDKAVINRLGFNNEGHEAAFKRLSRRAGKSGIVGVNIGANKDAEDRIADYVAGIRRFYQLARYFTVNISSPNTPGLRNLQAREALHELLSRVLEARDEEGNMCTLKRPVFLKIAPDLTDEELDDIAAEADAQKLDGIIVSNTTLSRSGLKNPENSNETGGLSGAPLFERSTVVLARMRERVGPDMPLIGVGGIDSAETALAKIKAGADLVQLYSGLIYRGPGLPGEILRGLSTAIKYEGVSSIAELRDRDTKEWAARKLIS.

Residues 61–65 (AGYDK) and Thr-85 contribute to the FMN site. Lys-65 is a binding site for substrate. 110–114 (NRLGF) serves as a coordination point for substrate. Positions 139 and 170 each coordinate FMN. Asn-170 provides a ligand contact to substrate. Ser-173 (nucleophile) is an active-site residue. A substrate-binding site is contributed by Asn-175. Lys-215 and Ser-243 together coordinate FMN. 244–245 (NT) is a substrate binding site. FMN contacts are provided by residues Gly-266, Gly-295, and 316-317 (YS).

Belongs to the dihydroorotate dehydrogenase family. Type 2 subfamily. As to quaternary structure, monomer. FMN serves as cofactor.

Its subcellular location is the cell membrane. It catalyses the reaction (S)-dihydroorotate + a quinone = orotate + a quinol. It participates in pyrimidine metabolism; UMP biosynthesis via de novo pathway; orotate from (S)-dihydroorotate (quinone route): step 1/1. Catalyzes the conversion of dihydroorotate to orotate with quinone as electron acceptor. The chain is Dihydroorotate dehydrogenase (quinone) from Brucella melitensis biotype 2 (strain ATCC 23457).